Here is a 411-residue protein sequence, read N- to C-terminus: Ribose-phosphate pyrophosphokinase 3, chloroplastic (411 aa).

The transit peptide at 1–39 (MAAISPANATTAASLSLPQFSSTSSSLSSSSSPSFLNFK) directs the protein to the chloroplast. 2 residues coordinate Mg(2+): aspartate 231 and histidine 233. Residues 314–329 (GRHVVIVDDLVQSGGT) are binding of phosphoribosylpyrophosphate.

Belongs to the ribose-phosphate pyrophosphokinase family.

Its subcellular location is the plastid. It is found in the chloroplast. It catalyses the reaction D-ribose 5-phosphate + ATP = 5-phospho-alpha-D-ribose 1-diphosphate + AMP + H(+). The sequence is that of Ribose-phosphate pyrophosphokinase 3, chloroplastic (PRS3) from Arabidopsis thaliana (Mouse-ear cress).